The sequence spans 520 residues: Vacuolar protein sorting-associated protein 9A (520 aa).

The region spanning 102–246 is the VPS9 domain; that stretch reads VIADEKLFQK…ISNIDAKSIS (145 aa). GTP contacts are provided by N180 and D185. 3 disordered regions span residues 267 to 331, 396 to 433, and 464 to 520; these read DSQT…AESI, LAPS…ETDR, and LVEG…EASE. Positions 287-323 are enriched in polar residues; it reads LQKTQSLNPKRENTLFQSKSSDSLSGTNELLNINSET. Residue S330 is modified to Phosphoserine. Over residues 396 to 407 the composition is skewed to low complexity; the sequence is LAPSSSPLQASS. Basic and acidic residues-rich tracts occupy residues 413–433 and 464–497; these read KESE…ETDR and LVEG…REGD.

As to quaternary structure, homodimer. The homodimer interacts with RABF2B. Interacts with RABF1 and RABF2A. As to expression, widely expressed.

Functions as a guanine nucleotide exchange factor (GEF) for Rab small GTPases. Activates specifically RABF1, RABF2A and RABF2B proteins. Required for early stages of embryogenesis, cytokinesis, embryogenesis, and organ development. Is essential for the establishment or maintenance of the polar localization of the auxin efflux carrier PIN1. In Arabidopsis thaliana (Mouse-ear cress), this protein is Vacuolar protein sorting-associated protein 9A.